The sequence spans 230 residues: Large ribosomal subunit protein uL1 (230 aa).

Belongs to the universal ribosomal protein uL1 family. Part of the 50S ribosomal subunit.

Functionally, binds directly to 23S rRNA. The L1 stalk is quite mobile in the ribosome, and is involved in E site tRNA release. In terms of biological role, protein L1 is also a translational repressor protein, it controls the translation of the L11 operon by binding to its mRNA. In Staphylococcus aureus (strain N315), this protein is Large ribosomal subunit protein uL1.